The chain runs to 703 residues: WD repeat-containing protein pop2 (703 aa).

Polar residues-rich tracts occupy residues 1–27 (MSLS…SSSP), 63–73 (ESNSCNGNTSS), and 156–178 (SISS…TVSP). Disordered regions lie at residues 1 to 73 (MSLS…NTSS) and 156 to 180 (SISS…SPGS). The tract at residues 1–170 (MSLSRCPTDN…SDNFPPSPKV (170 aa)) is interaction with pop1. The F-box domain occupies 236 to 283 (KDILSNLPFSIVQSILLNLDIHSFLSCRLVSPTWNRILDVHTSYWKHM). WD repeat units lie at residues 389–417 (GHKE…RVWN), 429–473 (GHIS…RVWK), 505–533 (GHTD…RIWR), 545–575 (GHSL…RVWD), 587–615 (GHDA…RIWD), and 625–654 (LPSN…KLWD).

Homodimer and heterodimer with pop1. Binds to cul1, pip1 and phosphorylated cdc18.

The protein localises to the cytoplasm. It localises to the nucleus. Its function is as follows. Involved in maintenance of ploidy through proteasome dependent degradation of CDK inhibitor rum1 and S-phase initiator cdc18. Functions as a recognition factor for rum1 and cdc18, which are subsequently ubiquitinated and targeted to the 26S proteasome for degradation. Together with pop1, required for cig2 instability during G2 and M phase and cig2 degradation in exponentially growing cells. The polypeptide is WD repeat-containing protein pop2 (pop2) (Schizosaccharomyces pombe (strain 972 / ATCC 24843) (Fission yeast)).